Here is a 65-residue protein sequence, read N- to C-terminus: Large ribosomal subunit protein bL33c (65 aa).

This sequence belongs to the bacterial ribosomal protein bL33 family.

Its subcellular location is the plastid. It localises to the chloroplast. The sequence is that of Large ribosomal subunit protein bL33c (rpl33) from Porphyra purpurea (Red seaweed).